A 442-amino-acid chain; its full sequence is Septin-8 (442 aa).

Residues 1-16 show a composition bias toward basic and acidic residues; the sequence is MAATDLERVSSAEPEP. Positions 1 to 23 are disordered; it reads MAATDLERVSSAEPEPRSLSLGG. A2 is subject to N-acetylalanine. Position 10 is a phosphoserine (S10). The 267-residue stretch at 41-307 folds into the Septin-type G domain; it reads QGFSFNILCV…ELYRRCKLEE (267 aa). Positions 51–58 are G1 motif; sequence GETGIGKS. GTP-binding positions include 51 to 58, G106, 187 to 195, G241, and R256; these read GETGIGKS and KADTISKSE. The interval 103 to 106 is G3 motif; it reads DAVG. The tract at residues 186–189 is G4 motif; the sequence is AKAD. The stretch at 322 to 410 forms a coiled coil; it reads LQETYEAKRK…RKAAVEALQS (89 aa). Over residues 377 to 391 the composition is skewed to basic and acidic residues; sequence HQEEKRKVEEKRREL. A disordered region spans residues 377 to 442; sequence HQEEKRKVEE…WSSIYSVTIP (66 aa). Polar residues-rich tracts occupy residues 408–420 and 432–442; these read LQSQ…SQQP and GWSSIYSVTIP.

This sequence belongs to the TRAFAC class TrmE-Era-EngA-EngB-Septin-like GTPase superfamily. Septin GTPase family. In terms of assembly, septins polymerize into heterooligomeric protein complexes that form filaments, and can associate with cellular membranes, actin filaments and microtubules. GTPase activity is required for filament formation. Interacts with CDK14, SEPTIN4, SEPTIN5 and SEPTIN7. Interacts with VAMP2; the interaction inhibits interaction of VAMP2 with SYP. Interacts with STX1A.

The protein resides in the cytoplasm. The protein localises to the cytoskeleton. Its subcellular location is the synapse. It localises to the cell projection. It is found in the axon. The protein resides in the cytoplasmic vesicle. The protein localises to the secretory vesicle. Its subcellular location is the synaptic vesicle membrane. It localises to the presynapse. Filament-forming cytoskeletal GTPase. May play a role in platelet secretion. Seems to participate in the process of SNARE complex formation in synaptic vesicles. The protein is Septin-8 of Otolemur garnettii (Small-eared galago).